The chain runs to 210 residues: Glutathione S-transferase 4 (210 aa).

In terms of domain architecture, GST N-terminal spans 1-80 (MDFYYLPLSA…YLVEKYGKQD (80 aa)). Residues Ser-9, 50–52 (HTI), and 64–66 (ESR) contribute to the glutathione site. The GST C-terminal domain maps to 87-208 (CPKKRALINQ…AGALEMKTLI (122 aa)).

This sequence belongs to the GST superfamily. Theta family. In terms of assembly, homodimer.

It catalyses the reaction RX + glutathione = an S-substituted glutathione + a halide anion + H(+). Functionally, conjugation of reduced glutathione to a wide number of exogenous and endogenous hydrophobic electrophiles. This Musca domestica (House fly) protein is Glutathione S-transferase 4 (Gst4).